We begin with the raw amino-acid sequence, 427 residues long: Glutamyl-tRNA reductase (427 aa).

Substrate is bound by residues 49 to 52 (TCNR), Ser-109, 114 to 116 (EGQ), and Gln-120. Cys-50 serves as the catalytic Nucleophile. 188–193 (GAGKMA) contributes to the NADP(+) binding site.

The protein belongs to the glutamyl-tRNA reductase family. In terms of assembly, homodimer.

It catalyses the reaction (S)-4-amino-5-oxopentanoate + tRNA(Glu) + NADP(+) = L-glutamyl-tRNA(Glu) + NADPH + H(+). It functions in the pathway porphyrin-containing compound metabolism; protoporphyrin-IX biosynthesis; 5-aminolevulinate from L-glutamyl-tRNA(Glu): step 1/2. Its pathway is porphyrin-containing compound metabolism; chlorophyll biosynthesis. Feedback inhibition by heme. Catalyzes the NADPH-dependent reduction of glutamyl-tRNA(Glu) to glutamate 1-semialdehyde (GSA). In Synechocystis sp. (strain ATCC 27184 / PCC 6803 / Kazusa), this protein is Glutamyl-tRNA reductase.